The primary structure comprises 217 residues: Small ribosomal subunit protein uS3 (217 aa).

Residues 38–106 form the KH type-2 domain; it reads IRKFIQKELA…QVHINIIEIK (69 aa).

Belongs to the universal ribosomal protein uS3 family. In terms of assembly, part of the 30S ribosomal subunit. Forms a tight complex with proteins S10 and S14.

Binds the lower part of the 30S subunit head. Binds mRNA in the 70S ribosome, positioning it for translation. The sequence is that of Small ribosomal subunit protein uS3 from Streptococcus uberis (strain ATCC BAA-854 / 0140J).